We begin with the raw amino-acid sequence, 203 residues long: MRGKFITFEGIDGAGKSTHIDWVADRLRARSDIAGVVTTREPGGTSLGEDLRQILLHRKMHLETEALLMFAARREHIAEVIAPALERGKWVISDRFTDATFAYQGGGRGLATERLEVLEDWVQGGLQPDLTLLFDVPLETASERLAGARAPDRFESESRAFFQRTRDEYLRRAAQSPQRFRVIDATRSIADIRDELEKIIATI.

Residue 10–17 participates in ATP binding; it reads GIDGAGKS.

The protein belongs to the thymidylate kinase family.

The catalysed reaction is dTMP + ATP = dTDP + ADP. Its function is as follows. Phosphorylation of dTMP to form dTDP in both de novo and salvage pathways of dTTP synthesis. The polypeptide is Thymidylate kinase (Cupriavidus necator (strain ATCC 17699 / DSM 428 / KCTC 22496 / NCIMB 10442 / H16 / Stanier 337) (Ralstonia eutropha)).